A 66-amino-acid chain; its full sequence is Beta-toxin Cbo2 (66 aa).

An LCN-type CS-alpha/beta domain is found at 1-66 (KEGYIVNYHD…VWPLPKKTCN (66 aa)). Disulfide bonds link C12–C65, C16–C41, C25–C46, and C29–C48. Residue N66 is modified to Asparagine amide.

It belongs to the long (4 C-C) scorpion toxin superfamily. Sodium channel inhibitor family. Beta subfamily. In terms of tissue distribution, expressed by the venom gland.

The protein resides in the secreted. Beta toxins bind voltage-independently at site-4 of sodium channels and shift the voltage of activation toward more negative potentials thereby affecting sodium channel activation and promoting spontaneous and repetitive firing. A mixture of Cbo2 and Cbo3 is weakly active on the human voltage-gated sodium channels Nav1.4/SCN4A and Nav1.6/SCN8A when tested at 200 nM. In vivo, is toxic to mice when intraperitoneally injected. This Centruroides bonito (Scorpion) protein is Beta-toxin Cbo2.